The primary structure comprises 199 residues: MTDLYAEALATFAALYAEAQNSAELEASAMTVATANVDGRPSARTVLLKAFDARGFVFYTHLDSAKGRDLQTHPQAALLFLWRSLREAGIQVRIEGGVQLVSADESDAYFASRPRMSQIGAWASRQSQALGSREEFDAAIAKVEATFAGREVPRPDGWGGFRVVPQAFEFWYGAKFRLHERWRYEADAASHWSKRMLYP.

Residues 44–49 (RTVLLK), 59–60 (YT), Lys-66, and Gln-91 each bind FMN. Lys-49 is a binding site for substrate. Substrate-binding residues include Tyr-109, Arg-113, and Ser-117. FMN is bound by residues 126 to 127 (QS) and Trp-171. Substrate is bound at residue 177–179 (RLH). Arg-181 contacts FMN.

This sequence belongs to the pyridoxamine 5'-phosphate oxidase family. As to quaternary structure, homodimer. The cofactor is FMN.

It catalyses the reaction pyridoxamine 5'-phosphate + O2 + H2O = pyridoxal 5'-phosphate + H2O2 + NH4(+). The catalysed reaction is pyridoxine 5'-phosphate + O2 = pyridoxal 5'-phosphate + H2O2. Its pathway is cofactor metabolism; pyridoxal 5'-phosphate salvage; pyridoxal 5'-phosphate from pyridoxamine 5'-phosphate: step 1/1. The protein operates within cofactor metabolism; pyridoxal 5'-phosphate salvage; pyridoxal 5'-phosphate from pyridoxine 5'-phosphate: step 1/1. Catalyzes the oxidation of either pyridoxine 5'-phosphate (PNP) or pyridoxamine 5'-phosphate (PMP) into pyridoxal 5'-phosphate (PLP). The chain is Pyridoxine/pyridoxamine 5'-phosphate oxidase from Xanthomonas axonopodis pv. citri (strain 306).